The primary structure comprises 261 residues: Glucose 1-dehydrogenase 3 (261 aa).

Residue 11-35 (VITGGSTGLGRAMAVRFGQEEAKVV) coordinates NAD(+). Ser-145 lines the substrate pocket. The Proton acceptor role is filled by Tyr-158.

This sequence belongs to the short-chain dehydrogenases/reductases (SDR) family. Homotetramer.

It carries out the reaction D-glucose + NAD(+) = D-glucono-1,5-lactone + NADH + H(+). It catalyses the reaction D-glucose + NADP(+) = D-glucono-1,5-lactone + NADPH + H(+). This is Glucose 1-dehydrogenase 3 (gdhIII) from Priestia megaterium (Bacillus megaterium).